The primary structure comprises 61 residues: Small ribosomal subunit protein uS14 (61 aa).

4 residues coordinate Zn(2+): Cys24, Cys27, Cys40, and Cys43.

It belongs to the universal ribosomal protein uS14 family. Zinc-binding uS14 subfamily. In terms of assembly, part of the 30S ribosomal subunit. Contacts proteins S3 and S10. Zn(2+) is required as a cofactor.

Its function is as follows. Binds 16S rRNA, required for the assembly of 30S particles and may also be responsible for determining the conformation of the 16S rRNA at the A site. The polypeptide is Small ribosomal subunit protein uS14 (Thermus aquaticus).